Consider the following 306-residue polypeptide: Pyridoxal 5'-phosphate synthase subunit PdxS (306 aa).

Aspartate 36 serves as a coordination point for D-ribose 5-phosphate. Lysine 93 acts as the Schiff-base intermediate with D-ribose 5-phosphate in catalysis. Residue glycine 165 participates in D-ribose 5-phosphate binding. Arginine 177 serves as a coordination point for D-glyceraldehyde 3-phosphate. D-ribose 5-phosphate contacts are provided by residues glycine 226 and 247–248 (GS).

Belongs to the PdxS/SNZ family. In terms of assembly, in the presence of PdxT, forms a dodecamer of heterodimers.

It carries out the reaction aldehydo-D-ribose 5-phosphate + D-glyceraldehyde 3-phosphate + L-glutamine = pyridoxal 5'-phosphate + L-glutamate + phosphate + 3 H2O + H(+). It functions in the pathway cofactor biosynthesis; pyridoxal 5'-phosphate biosynthesis. Its function is as follows. Catalyzes the formation of pyridoxal 5'-phosphate from ribose 5-phosphate (RBP), glyceraldehyde 3-phosphate (G3P) and ammonia. The ammonia is provided by the PdxT subunit. Can also use ribulose 5-phosphate and dihydroxyacetone phosphate as substrates, resulting from enzyme-catalyzed isomerization of RBP and G3P, respectively. The sequence is that of Pyridoxal 5'-phosphate synthase subunit PdxS from Corynebacterium urealyticum (strain ATCC 43042 / DSM 7109).